Consider the following 232-residue polypeptide: Vesicle transport through interaction with t-SNAREs homolog 1B (232 aa).

Alanine 2 carries the N-acetylalanine modification. Interaction with CLINT1 regions lie at residues alanine 2–glutamate 23 and alanine 69–phenylalanine 73. Residues alanine 2–leucine 208 are Cytoplasmic-facing. Residues threonine 35 to threonine 98 are a coiled coil. Threonine 103 carries the post-translational modification Phosphothreonine. At arginine 107 the chain carries Omega-N-methylarginine. Serine 138 is subject to Phosphoserine. A coiled-coil region spans residues serine 161 to methionine 198. Residues leucine 209–phenylalanine 229 form a helical; Anchor for type IV membrane protein membrane-spanning segment. Residues arginine 230 to histidine 232 lie on the Vesicular side of the membrane.

It belongs to the VTI1 family. As to quaternary structure, forms a SNARE complex with STX7, STX8 and VAMP8 which functions in the homotypic fusion of late endosomes. Component of the SNARE complex composed of STX7, STX8, VAMP7 and VIT1B that is required for heterotypic fusion of late endosomes with lysosomes. May interact with STX17. Interacts with CLINT1. In terms of tissue distribution, expressed in all tissues examined.

It localises to the early endosome membrane. The protein resides in the late endosome membrane. The protein localises to the lysosome membrane. Its subcellular location is the cytoplasmic granule. It is found in the recycling endosome membrane. Functionally, V-SNARE that mediates vesicle transport pathways through interactions with t-SNAREs on the target membrane. These interactions are proposed to mediate aspects of the specificity of vesicle trafficking and to promote fusion of the lipid bilayers. May be concerned with increased secretion of cytokines associated with cellular senescence. The sequence is that of Vesicle transport through interaction with t-SNAREs homolog 1B (VTI1B) from Homo sapiens (Human).